The chain runs to 447 residues: Voltage-gated purine nucleotide uniporter SLC17A9 (447 aa).

Residues Met1–Asp26 are disordered. A compositionally biased stretch (basic and acidic residues) spans Glu14–Asp26. Transmembrane regions (helical) follow at residues Leu36–Cys58, Gly74–Leu94, Val103–His123, Leu129–Ala149, Thr169–Leu189, Val197–Leu217, Val252–Trp272, Trp287–Ile307, Val327–Leu347, Gly380–Leu400, and Cys413–Gly433.

The protein belongs to the major facilitator superfamily. Sodium/anion cotransporter family.

The protein localises to the cytoplasmic vesicle. Its subcellular location is the secretory vesicle. It is found in the chromaffin granule membrane. It localises to the secretory vesicle membrane. The protein resides in the lysosome membrane. It catalyses the reaction ATP(in) = ATP(out). It carries out the reaction ADP(in) = ADP(out). The catalysed reaction is GTP(in) = GTP(out). With respect to regulation, activity is chloride-dependent. Voltage-gated ATP nucleotide uniporter that can also transport the purine nucleotides ADP and GTP. Uses the membrane potential as the driving force to control ATP accumulation in lysosomes and secretory vesicles. By controlling ATP storage in lysosomes, regulates ATP-dependent proteins of these organelles. Also indirectly regulates the exocytosis of ATP through its import into lysosomes in astrocytes and secretory vesicles such as adrenal chromaffin granules, mucin granules and synaptic vesicles. In Rattus norvegicus (Rat), this protein is Voltage-gated purine nucleotide uniporter SLC17A9.